The following is a 239-amino-acid chain: Tetraspanin-9 (239 aa).

At 1–13 the chain is on the cytoplasmic side; it reads MARGCLCCLKYMM. A helical membrane pass occupies residues 14 to 34; the sequence is FLFNLIFWLCGCGLLGVGIWL. The Extracellular portion of the chain corresponds to 35–55; the sequence is SVSQGNFATFSPSFPSLSAAN. Residues 56–76 traverse the membrane as a helical segment; the sequence is LVIAIGTIVMVTGFLGCLGAI. At 77 to 85 the chain is on the cytoplasmic side; it reads KENKCLLLS. Residues 86–106 form a helical membrane-spanning segment; that stretch reads FFIVLLVILLAELILLILFFV. Topologically, residues 107 to 203 are extracellular; sequence YMDKVNENAK…VKMWFDDNKH (97 aa). N-linked (GlcNAc...) asparagine glycosylation is present at N180. A helical transmembrane segment spans residues 204–224; that stretch reads VLGTVGMCILIMQILGMAFSM. The Cytoplasmic portion of the chain corresponds to 225–239; sequence TLFQHIHRTGKKYDA.

The protein belongs to the tetraspanin (TM4SF) family. As to quaternary structure, found in a complex with GP6. In terms of processing, glycosylated. Expressed in megakaryocytes and platelets (at protein level).

It is found in the membrane. This is Tetraspanin-9 (TSPAN9) from Homo sapiens (Human).